A 245-amino-acid polypeptide reads, in one-letter code: Probable transcriptional regulatory protein NSE_0641 (245 aa).

Residues 1–22 (MAGHSQYANIKHRKNAQDAKRA) form a disordered region.

The protein belongs to the TACO1 family.

The protein localises to the cytoplasm. This chain is Probable transcriptional regulatory protein NSE_0641, found in Neorickettsia sennetsu (strain ATCC VR-367 / Miyayama) (Ehrlichia sennetsu).